Consider the following 233-residue polypeptide: Homeobox protein Hox-D4a (233 aa).

An Antp-type hexapeptide motif is present at residues 124 to 129 (VYPWMK). Positions 145–204 (PKRSRTAYTRQQVLELEKEFHFNRYLTRRRRIEIAHTLCLSERQIKIWFQNRRMKWTKDH) form a DNA-binding region, homeobox. Residues 203–233 (DHKLPNTKGRSAPASSHLQSIHKDQTDITSL) form a disordered region. Residues 223-233 (IHKDQTDITSL) show a composition bias toward basic and acidic residues.

The protein belongs to the Antp homeobox family. Deformed subfamily.

It is found in the nucleus. Functionally, sequence-specific transcription factor which is part of a developmental regulatory system that provides cells with specific positional identities on the anterior-posterior axis. The protein is Homeobox protein Hox-D4a (hoxd4a) of Takifugu rubripes (Japanese pufferfish).